The primary structure comprises 848 residues: Adenylate cyclase (848 aa).

Residues 1–535 form a catalytic region; sequence MYLYIETLKQ…DVSHHFPLRL (535 aa). Residues 541 to 848 form a regulatory region; that stretch reads KALYSPCEIR…DTPLLQQYFS (308 aa). The residue at position 609 (histidine 609) is a Phosphohistidine; by CRR.

The protein belongs to the adenylyl cyclase class-1 family.

The protein resides in the cytoplasm. It catalyses the reaction ATP = 3',5'-cyclic AMP + diphosphate. With respect to regulation, the regulatory domain is involved in the regulation of cyclase activity by the carbon source. Activated by the PTS system, glucose-specific IIA component (CRR). Functionally, catalyzes the formation of the second messenger cAMP from ATP. Its transcript is probably degraded by endoribonuclease LS (rnlA), decreasing cAMP levels and the negative regulator Crp-cAMP, which then induces its own transcription again. The chain is Adenylate cyclase (cyaA) from Escherichia coli (strain K12).